We begin with the raw amino-acid sequence, 253 residues long: ATP synthase subunit a (253 aa).

Transmembrane regions (helical) follow at residues 27–47 (ISFT…IGFF), 87–107 (FFPF…IGMV), 117–137 (IIVT…VGLI), 146–166 (LFAP…IEII), 196–216 (FTVM…LAFA), and 224–244 (LEFL…CVYL).

Belongs to the ATPase A chain family. F-type ATPases have 2 components, CF(1) - the catalytic core - and CF(0) - the membrane proton channel. CF(1) has five subunits: alpha(3), beta(3), gamma(1), delta(1), epsilon(1). CF(0) has three main subunits: a(1), b(2) and c(9-12). The alpha and beta chains form an alternating ring which encloses part of the gamma chain. CF(1) is attached to CF(0) by a central stalk formed by the gamma and epsilon chains, while a peripheral stalk is formed by the delta and b chains.

It is found in the cell inner membrane. Its function is as follows. Key component of the proton channel; it plays a direct role in the translocation of protons across the membrane. The sequence is that of ATP synthase subunit a from Hyphomonas neptunium (strain ATCC 15444).